A 234-amino-acid chain; its full sequence is Probable Ufm1-specific protease 1 (234 aa).

Residues Cys70, Asp194, and His196 contribute to the active site.

It belongs to the peptidase C78 family.

Functionally, thiol protease which recognizes and hydrolyzes the peptide bond at the C-terminal Gly of UFM1, a ubiquitin-like modifier protein bound to a number of target proteins. The chain is Probable Ufm1-specific protease 1 from Drosophila melanogaster (Fruit fly).